Here is a 117-residue protein sequence, read N- to C-terminus: MVEMESAKSVLEPLAWLMQMITGLLMILLVTAHFYVTHMTTHDALRYAEVVERVAQPEFKALYALLLLAVSFHAFNGLRAILLDTNAGMRKKGAVSALTTLAFLLAFFYGLYLLFSI.

Over 1–15 the chain is Cytoplasmic; sequence MVEMESAKSVLEPLA. Residues 16 to 36 traverse the membrane as a helical segment; sequence WLMQMITGLLMILLVTAHFYV. The Extracellular segment spans residues 37 to 61; that stretch reads THMTTHDALRYAEVVERVAQPEFKA. A helical membrane pass occupies residues 62–82; the sequence is LYALLLLAVSFHAFNGLRAIL. Histidine 73 lines the heme pocket. Over 83–92 the chain is Cytoplasmic; it reads LDTNAGMRKK. Residues 93–115 form a helical membrane-spanning segment; that stretch reads GAVSALTTLAFLLAFFYGLYLLF.

Part of an enzyme complex containing four subunits: a flavoprotein, an iron-sulfur protein, plus two membrane-anchoring proteins, SdhC and SdhD. Requires heme as cofactor.

It is found in the cell membrane. The protein operates within carbohydrate metabolism; tricarboxylic acid cycle. Membrane-anchoring subunit of succinate dehydrogenase (SDH). The protein is Succinate dehydrogenase hydrophobic membrane anchor subunit (sdhD) of Archaeoglobus fulgidus (strain ATCC 49558 / DSM 4304 / JCM 9628 / NBRC 100126 / VC-16).